Consider the following 541-residue polypeptide: Chaperonin GroEL 2 (541 aa).

ATP-binding positions include 29–32 (TLGP), 86–90 (DGTTT), Gly413, 477–479 (NAA), and Asp493.

It belongs to the chaperonin (HSP60) family. Forms a cylinder of 14 subunits composed of two heptameric rings stacked back-to-back. Interacts with the co-chaperonin GroES.

It localises to the cytoplasm. The catalysed reaction is ATP + H2O + a folded polypeptide = ADP + phosphate + an unfolded polypeptide.. Its function is as follows. Together with its co-chaperonin GroES, plays an essential role in assisting protein folding. The GroEL-GroES system forms a nano-cage that allows encapsulation of the non-native substrate proteins and provides a physical environment optimized to promote and accelerate protein folding. In Nocardioides sp. (strain ATCC BAA-499 / JS614), this protein is Chaperonin GroEL 2.